The primary structure comprises 118 residues: Small ribosomal subunit protein uS13 (118 aa).

The disordered stretch occupies residues 94 to 118; it reads SLPLRGQRTKTNARTRKGPRKPIKK.

Belongs to the universal ribosomal protein uS13 family. In terms of assembly, part of the 30S ribosomal subunit. Forms a loose heterodimer with protein S19. Forms two bridges to the 50S subunit in the 70S ribosome.

In terms of biological role, located at the top of the head of the 30S subunit, it contacts several helices of the 16S rRNA. In the 70S ribosome it contacts the 23S rRNA (bridge B1a) and protein L5 of the 50S subunit (bridge B1b), connecting the 2 subunits; these bridges are implicated in subunit movement. Contacts the tRNAs in the A and P-sites. The chain is Small ribosomal subunit protein uS13 from Shewanella amazonensis (strain ATCC BAA-1098 / SB2B).